The chain runs to 301 residues: Beta carbonic anhydrase 5, chloroplastic (301 aa).

Residues 1 to 56 constitute a chloroplast transit peptide; the sequence is MAATPTHFSVSHDPFSSTSLLNLQTQAIFGPNHSLKTTQLRIPASFRRKATNLQVM. A Phosphothreonine modification is found at threonine 65. The residue at position 128 (serine 128) is a Phosphoserine. The residue at position 231 (cysteine 231) is an S-nitrosocysteine.

This sequence belongs to the beta-class carbonic anhydrase family. As to expression, strongly expressed in aerial tissues including leaves, stems, flowers and siliques.

The protein resides in the plastid. It is found in the chloroplast. The catalysed reaction is hydrogencarbonate + H(+) = CO2 + H2O. Reversible hydration of carbon dioxide. The protein is Beta carbonic anhydrase 5, chloroplastic (BCA5) of Arabidopsis thaliana (Mouse-ear cress).